The following is a 245-amino-acid chain: Neurovirulence factor ICP34.5 (245 aa).

Basic residues predominate over residues 1 to 15; it reads MARRRRRHRGPRRPR. The interval 1-17 is required for nucleolar localization; that stretch reads MARRRRRHRGPRRPRPP. 2 disordered regions span residues 1–122 and 143–172; these read MARR…PFRL and RRAG…PATP. Positions 25-36 are enriched in polar residues; the sequence is TAQSQVTSTPNS. A compositionally biased stretch (acidic residues) spans 67-77; it reads ASDDDDDDDWP. Pro residues-rich tracts occupy residues 78 to 87 and 113 to 122; these read DSPPPEPAPE and SHPPSRPFRL. Residues 122–131 carry the Nuclear export signal motif; sequence LPPRLALRLR. 6 tandem repeats follow at residues 155-157, 158-160, 161-163, 164-166, 167-169, and 170-172. The 6 X 3 AA tandem repeats of A-T-P stretch occupies residues 155–172; sequence ATPATPATPATPATPATP. Low complexity predominate over residues 158 to 172; sequence ATPATPATPATPATP. Positions 172–185 are binding to PP1CA; sequence PARVRFSPHVRVRH. The segment at 172 to 185 is interaction with host PPP1CA; the sequence is PARVRFSPHVRVRH. The tract at residues 187-245 is important for interferon resistance; that stretch reads VVWASAARLARRGSWARERADRARFRRRVAEAEAVIGPCLGPEARARALARGAGPANSV. The short motif at 197-215 is the Bipartite nuclear localization signal element; sequence RRGSWARERADRARFRRRV. The tract at residues 215–230 is interaction with host EIF2S1/EIF-2ALPHA; that stretch reads VAEAEAVIGPCLGPEA.

It belongs to the PPP1R15 family. In terms of assembly, interacts with host PPP1CA to form a high-molecular-weight complex that dephosphorylates EIF2S1/eIF-2alpha. Interacts with host EIF2S1/eIF-2alpha; this interaction is crucial for the specific dephosphorylation of EIF2S1/eIF-2alpha by PPP1CA. Binds to proliferating cell nuclear antigen (PCNA), which may release host cells from growth arrest and facilitate viral replication. Interacts (via N-terminus) with host C1QBP and PRKCA. Interacts with protein UL31. Interacts with host TBK1. Interacts with host STING/TMEM173; this interaction inhibits the intracellular DNA sensing pathway. Interacts with host BECN1; this interaction modulates host autophagy.

The protein resides in the host cytoplasm. The protein localises to the host nucleus. It is found in the host nucleolus. Its subcellular location is the virion. Functionally, inhibits the establishment of the immune response and of the integrated stress response (ISR) in the infected cell. Plays essential roles in viral nuclear egress to mediate capsid transit across the nuclear membrane. Facilitates nuclear egress cooperatively with host C1QBP and protein kinase C/PKC to induce lamin A/C phosphorylation and subsequent reorganization. In turn, lamina disassembles and nuclear egress occurs. Recruits the serine/threonine protein phosphatase PPP1CA/PP1-alpha to dephosphorylate the translation initiation factor EIF2S1/eIF-2alpha, thereby couteracting the host shutoff of protein synthesis involving double-stranded RNA-dependent protein kinase EIF2AK2/PKR. In turn, controls host IRF3 activation and subsequently inhibits host interferon response. Controls the DNA sensing pathway by interacting with and inhibiting host STING/TMEM173. Also down-modulates the host MHC class II proteins cell surface expression. Acts as a neurovirulence factor that has a profound effect on the growth of the virus in central nervous system tissue, by interacting with host BECN1 and thereby antagonizing the host autophagy response. The protein is Neurovirulence factor ICP34.5 (RL1) of Homo sapiens (Human).